The primary structure comprises 64 residues: Large ribosomal subunit protein bL35 (64 aa).

Residues 1-24 show a composition bias toward basic residues; the sequence is MPKMKSHRGACKRFKKTASGKVKR. The disordered stretch occupies residues 1–64; the sequence is MPKMKSHRGA…EKQIKRMILA (64 aa). A compositionally biased stretch (basic and acidic residues) spans 25–35; it reads ERMYGSHNLEK. Over residues 36 to 45 the composition is skewed to basic residues; it reads KNRKRTRRLH.

It belongs to the bacterial ribosomal protein bL35 family.

The protein is Large ribosomal subunit protein bL35 of Prosthecochloris aestuarii (strain DSM 271 / SK 413).